The primary structure comprises 369 residues: DNA replication and repair protein RecF (369 aa).

ATP is bound at residue Gly-30–Thr-37.

Belongs to the RecF family.

It localises to the cytoplasm. Functionally, the RecF protein is involved in DNA metabolism; it is required for DNA replication and normal SOS inducibility. RecF binds preferentially to single-stranded, linear DNA. It also seems to bind ATP. The protein is DNA replication and repair protein RecF of Streptococcus equi subsp. zooepidemicus (strain MGCS10565).